A 340-amino-acid chain; its full sequence is Ketol-acid reductoisomerase (NADP(+)) (340 aa).

A KARI N-terminal Rossmann domain is found at 1–183; it reads MAITVYYDKD…GGGRTGIIET (183 aa). NADP(+)-binding positions include 26–29, Arg-49, Ser-52, Ser-54, and 84–87; these read FGSQ and DEIQ. His-109 is an active-site residue. Gly-135 is a binding site for NADP(+). Residues 184-329 form the KARI C-terminal knotted domain; it reads TFKAETETDL…RNLRAMMPWI (146 aa). Mg(2+)-binding residues include Asp-192, Glu-196, Glu-228, and Glu-232. Ser-253 is a substrate binding site.

Belongs to the ketol-acid reductoisomerase family. The cofactor is Mg(2+).

The enzyme catalyses (2R)-2,3-dihydroxy-3-methylbutanoate + NADP(+) = (2S)-2-acetolactate + NADPH + H(+). The catalysed reaction is (2R,3R)-2,3-dihydroxy-3-methylpentanoate + NADP(+) = (S)-2-ethyl-2-hydroxy-3-oxobutanoate + NADPH + H(+). Its pathway is amino-acid biosynthesis; L-isoleucine biosynthesis; L-isoleucine from 2-oxobutanoate: step 2/4. The protein operates within amino-acid biosynthesis; L-valine biosynthesis; L-valine from pyruvate: step 2/4. Its function is as follows. Involved in the biosynthesis of branched-chain amino acids (BCAA). Catalyzes an alkyl-migration followed by a ketol-acid reduction of (S)-2-acetolactate (S2AL) to yield (R)-2,3-dihydroxy-isovalerate. In the isomerase reaction, S2AL is rearranged via a Mg-dependent methyl migration to produce 3-hydroxy-3-methyl-2-ketobutyrate (HMKB). In the reductase reaction, this 2-ketoacid undergoes a metal-dependent reduction by NADPH to yield (R)-2,3-dihydroxy-isovalerate. This Campylobacter jejuni subsp. jejuni serotype O:23/36 (strain 81-176) protein is Ketol-acid reductoisomerase (NADP(+)).